The chain runs to 340 residues: Guanine nucleotide-binding protein G(I)/G(S)/G(T) subunit beta-3 (340 aa).

WD repeat units follow at residues 53–83, 95–125, 141–170, 182–212, 224–254, 268–298, and 310–340; these read GHLA…IVWD, LRSS…SIYS, AHTG…ALWD, GHTG…KLWD, GHES…RLFD, SIIC…NVWD, and GHDN…KIWN.

It belongs to the WD repeat G protein beta family. In terms of assembly, g proteins are composed of 3 units, alpha, beta and gamma. Interacts with RASD2. As to expression, expressed at a high level in the heart and at a much lower level in the brain.

Functionally, guanine nucleotide-binding proteins (G proteins) are involved as a modulator or transducer in various transmembrane signaling systems. The beta and gamma chains are required for the GTPase activity, for replacement of GDP by GTP, and for G protein-effector interaction. This is Guanine nucleotide-binding protein G(I)/G(S)/G(T) subunit beta-3 (Gnb3) from Rattus norvegicus (Rat).